The sequence spans 231 residues: Quercetin 2,3-dioxygenase (231 aa).

Histidine 57, histidine 59, histidine 101, and glutamate 103 together coordinate a divalent metal cation.

It belongs to the pirin family. Zn(2+) serves as cofactor. It depends on Co(2+) as a cofactor. Fe(2+) is required as a cofactor.

The enzyme catalyses quercetin + O2 = 2-(3,4-dihydroxybenzoyloxy)-4,6-dihydroxybenzoate + CO. The protein operates within flavonoid metabolism; quercetin degradation. With respect to regulation, inhibited by kojic acid, sodium diethyldithiocarbamate and 1,10-phenanthroline monohydrochloride. In terms of biological role, has quercetin 2,3-dioxygenase activity in vitro. Its physiological role is unknown; however, may provide a mechanism that would avoid inhibition of key cellular proteins, such as DNA gyrase, by quercetin. In Escherichia coli (strain K12), this protein is Quercetin 2,3-dioxygenase (yhhW).